We begin with the raw amino-acid sequence, 128 residues long: Insulin-like growth factor 2 (128 aa).

The first 24 residues, 1 to 24, serve as a signal peptide directing secretion; it reads MGISMGKSMLVLLTFLAFASCCIA. Positions 25–52 are b; it reads AYRPSETLCGGELVDTLQFVCGDRGFYF. 3 cysteine pairs are disulfide-bonded: Cys33-Cys71, Cys45-Cys84, and Cys70-Cys75. The tract at residues 53-64 is c; sequence SRPASRVSRRSR. Residues 65-85 form an a region; it reads GIVEECCFRSCDLALLETYCA. The tract at residues 86-91 is d; the sequence is TPAKSE. Residues 92 to 128 constitute a propeptide, e peptide; that stretch reads RDVSASLAVLPDNFPRYPVGKFFQYDTWRQSTQRLRR.

It belongs to the insulin family. In terms of assembly, interacts with MYORG; this interaction is required for IGF2 secretion. Interacts with integrins ITGAV:ITGB3 and ITGA6:ITGB4; integrin-binding is required for IGF2 signaling. In terms of processing, proteolytically processed by PCSK4, proIGF2 is cleaved at Arg-128 and Arg-92 to generate big-IGF2 and mature IGF2.

The protein resides in the secreted. Functionally, the insulin-like growth factors possess growth-promoting activity. Major fetal growth hormone in mammals. Plays a key role in regulating fetoplacental development. IGF2 is influenced by placental lactogen. Also involved in tissue differentiation. In adults, involved in glucose metabolism in adipose tissue, skeletal muscle and liver. Acts as a ligand for integrin which is required for IGF2 signaling. Positively regulates myogenic transcription factor MYOD1 function by facilitating the recruitment of transcriptional coactivators, thereby controlling muscle terminal differentiation. Inhibits myoblast differentiation and metabolism via increasing the mitochondrial respiration rate. Its function is as follows. Preptin undergoes glucose-mediated co-secretion with insulin, and acts as a physiological amplifier of glucose-mediated insulin secretion. Exhibits osteogenic properties by increasing osteoblast mitogenic activity through phosphoactivation of MAPK1 and MAPK3. This is Insulin-like growth factor 2 from Cavia porcellus (Guinea pig).